A 1031-amino-acid chain; its full sequence is LRR receptor-like serine/threonine-protein kinase EFR (1031 aa).

An N-terminal signal peptide occupies residues Met1–Ala24. Residues Arg25–Gly653 lie on the Extracellular side of the membrane. N-linked (GlcNAc...) asparagine glycosylation is found at Asn28, Asn55, and Asn95. LRR repeat units lie at residues Phe98–Leu120, Arg122–Cys144, Arg146–Leu168, Lys170–Thr193, Ser194–Leu216, Gln218–Ile240, Ser242–Leu264, Asn267–Ile289, Ser291–Lys312, and Asn315–Glu335. Asn127 and Asn143 each carry an N-linked (GlcNAc...) asparagine glycan. Asn180 and Asn191 each carry an N-linked (GlcNAc...) asparagine glycan. N-linked (GlcNAc...) asparagine glycosylation is present at Asn239. A glycan (N-linked (GlcNAc...) asparagine) is linked at Asn288. N-linked (GlcNAc...) asparagine glycans are attached at residues Asn323, Asn329, Asn342, and Asn366. LRR repeat units follow at residues Gln345–Ser368, Thr370–Leu392, Ser394–Leu416, Asn418–Met440, Arg442–Cys464, Tyr466–Gln487, Ser490–Leu512, Leu514–Cys536, Ser538–Val560, Ser561–Pro584, and Ser585–Glu597. The N-linked (GlcNAc...) asparagine glycan is linked to Asn439. Asn478 carries an N-linked (GlcNAc...) asparagine glycan. Residues Asn571, Asn590, and Asn608 are each glycosylated (N-linked (GlcNAc...) asparagine). A helical transmembrane segment spans residues Ile654–Met674. The Cytoplasmic portion of the chain corresponds to Lys675–Met1031. The residue at position 709 (Thr709) is a Phosphothreonine. One can recognise a Protein kinase domain in the interval Phe712–Phe1001. ATP-binding positions include Ile718 to Val726 and Lys741. 2 positions are modified to phosphotyrosine: Tyr791 and Tyr836. Asp849 functions as the Proton acceptor in the catalytic mechanism. Tyr897 carries the phosphotyrosine modification. Residues Thr1005–Gln1020 show a composition bias toward polar residues. Residues Thr1005–Met1031 are disordered.

The protein belongs to the protein kinase superfamily. Ser/Thr protein kinase family. As to quaternary structure, binds to Pseudomonas syringae AvrPto1 and (via the kinase and cytoplasmic domains) to hopD2. Interacts with SERK3/BAK1, SERK4/BKK1, SERK1 and SERK2 in a specific ligand-induced manner. Binds to IOS1. Binds to BIK1 in the absence of pathogen elicitor; dissociates upon pathogen-associated molecular pattern (PAMP)-triggered activation. Post-translationally, autophosphorylated after elicitation with elfl18. Autophosphorylation is inhibited by the binding with avrPto1. Phosphorylation at T-836 is required for immune signaling. Polyubiquitinated at the kinase domain mediated by P.syringae AvrPtoB.

It localises to the cell membrane. It is found in the endomembrane system. It catalyses the reaction L-seryl-[protein] + ATP = O-phospho-L-seryl-[protein] + ADP + H(+). It carries out the reaction L-threonyl-[protein] + ATP = O-phospho-L-threonyl-[protein] + ADP + H(+). Constitutes the pattern-recognition receptor (PPR) that determines the specific perception of elongation factor Tu (EF-Tu), a potent elicitor of the defense response to pathogen-associated molecular patterns (PAMPs); phosphorylates BIK1 upon elicitation to regulate immune responses such as defense hormone expression (e.g. jasmonic acid (JA) and salicylic acid (SA)). Reduces transformation by Rhizobium radiobacter probably by inducing plant defense during the interaction. Binding to the effector AvrPto1 from P.syringae blocks the downstream plant immune response while interaction with hopD2 decreases the phosphorylation level of EFR upon elf18 treatment. Specific endoplasmic reticulum quality control components (ERD2B, CRT3, UGGT and STT3A) are required for the biogenesis of EFR. This chain is LRR receptor-like serine/threonine-protein kinase EFR, found in Arabidopsis thaliana (Mouse-ear cress).